Consider the following 225-residue polypeptide: Paired immunoglobulin-like type 2 receptor beta-2 (225 aa).

Positions 1-31 (MALLISLPGETPAMAQILLLLSSACLHAGNS) are cleaved as a signal peptide. Residues 32-195 (ARSNGGNDFG…NPSLMNLGAM (164 aa)) lie on the Extracellular side of the membrane. N-linked (GlcNAc...) asparagine glycosylation is found at asparagine 90, asparagine 107, and asparagine 160. Residues 196 to 216 (VTMLLAKVVVIILVYGWMIFL) traverse the membrane as a helical segment. Over 217-225 (RWKQRPDPA) the chain is Cytoplasmic.

Its subcellular location is the membrane. Paired receptors consist of highly related activating and inhibitory receptors and are widely involved in the regulation of the immune system. PILRB2 is probably a cellular signaling activating receptor that associates with ITAM-bearing adapter molecules on the cell surface. The protein is Paired immunoglobulin-like type 2 receptor beta-2 (Pilrb2) of Mus musculus (Mouse).